The primary structure comprises 336 residues: MFLSIMAGVIAFVLTVIAIPRFIKFYQLKKIGGQQMHEDVKQHLAKAGTPTMGGTVFLIVALLVSLIFSIILSKENSGNLGATFGILSVVLIYGIIGFLDDFLKIFKQINEGLTPKQKMSLQLIAGLIFYFVHVLPSGTSAINIFGFYLEVGYLYAFFVLFWVVGFSNAVNLTDGIDGLASISVVISLITYGIIAYNQTQFDILLIIVIMIGALLGFFVFNHKPAKVFMGDVGSLALGAMLAAISIALRQEWTLLFIGFVYVFETSSVMLQVAYFKYTKKKTGVGKRIFRMTPFHHHLELGGVSGKGNKWSEWKVDAFLWAIGIFMSAITLAILYL.

Transmembrane regions (helical) follow at residues 3-23, 52-72, 79-99, 123-143, 144-164, 175-195, 201-221, 227-247, 255-275, and 315-335; these read LSIM…PRFI, MGGT…SIIL, NLGA…IGFL, LIAG…SAIN, IFGF…FWVV, GIDG…GIIA, FDIL…FVFN, VFMG…ISIA, LFIG…VAYF, and VDAF…AILY.

This sequence belongs to the glycosyltransferase 4 family. MraY subfamily. It depends on Mg(2+) as a cofactor.

The protein localises to the cell membrane. It catalyses the reaction UDP-N-acetyl-alpha-D-muramoyl-L-alanyl-gamma-D-glutamyl-L-lysyl-D-alanyl-D-alanine + di-trans,octa-cis-undecaprenyl phosphate = Mur2Ac(oyl-L-Ala-gamma-D-Glu-L-Lys-D-Ala-D-Ala)-di-trans,octa-cis-undecaprenyl diphosphate + UMP. It participates in cell wall biogenesis; peptidoglycan biosynthesis. Catalyzes the initial step of the lipid cycle reactions in the biosynthesis of the cell wall peptidoglycan: transfers peptidoglycan precursor phospho-MurNAc-pentapeptide from UDP-MurNAc-pentapeptide onto the lipid carrier undecaprenyl phosphate, yielding undecaprenyl-pyrophosphoryl-MurNAc-pentapeptide, known as lipid I. This is Phospho-N-acetylmuramoyl-pentapeptide-transferase from Streptococcus agalactiae serotype Ia (strain ATCC 27591 / A909 / CDC SS700).